Here is a 155-residue protein sequence, read N- to C-terminus: Small ribosomal subunit protein uS7c (155 aa).

Belongs to the universal ribosomal protein uS7 family. In terms of assembly, part of the 30S ribosomal subunit.

The protein localises to the plastid. Its subcellular location is the chloroplast. One of the primary rRNA binding proteins, it binds directly to 16S rRNA where it nucleates assembly of the head domain of the 30S subunit. The chain is Small ribosomal subunit protein uS7c (rps7) from Coelogyne cristata (Orchid).